Here is a 398-residue protein sequence, read N- to C-terminus: 8-amino-7-oxononanoate synthase (398 aa).

Residue Arg26 coordinates substrate. Pyridoxal 5'-phosphate is bound at residue 113-114 (GF). Position 138 (His138) interacts with substrate. Pyridoxal 5'-phosphate contacts are provided by Ser181, His209, and Thr238. Lys241 is modified (N6-(pyridoxal phosphate)lysine). Thr355 lines the substrate pocket.

It belongs to the class-II pyridoxal-phosphate-dependent aminotransferase family. BioF subfamily. As to quaternary structure, homodimer. Requires pyridoxal 5'-phosphate as cofactor.

The enzyme catalyses 6-carboxyhexanoyl-[ACP] + L-alanine + H(+) = (8S)-8-amino-7-oxononanoate + holo-[ACP] + CO2. It participates in cofactor biosynthesis; biotin biosynthesis. In terms of biological role, catalyzes the decarboxylative condensation of pimeloyl-[acyl-carrier protein] and L-alanine to produce 8-amino-7-oxononanoate (AON), [acyl-carrier protein], and carbon dioxide. In Aeromonas salmonicida (strain A449), this protein is 8-amino-7-oxononanoate synthase.